The sequence spans 326 residues: UDP-3-O-acylglucosamine N-acyltransferase (326 aa).

Residue His-235 is the Proton acceptor of the active site.

Belongs to the transferase hexapeptide repeat family. LpxD subfamily. As to quaternary structure, homotrimer.

The catalysed reaction is a UDP-3-O-[(3R)-3-hydroxyacyl]-alpha-D-glucosamine + a (3R)-hydroxyacyl-[ACP] = a UDP-2-N,3-O-bis[(3R)-3-hydroxyacyl]-alpha-D-glucosamine + holo-[ACP] + H(+). Its pathway is bacterial outer membrane biogenesis; LPS lipid A biosynthesis. Functionally, catalyzes the N-acylation of UDP-3-O-acylglucosamine using 3-hydroxyacyl-ACP as the acyl donor. Is involved in the biosynthesis of lipid A, a phosphorylated glycolipid that anchors the lipopolysaccharide to the outer membrane of the cell. The protein is UDP-3-O-acylglucosamine N-acyltransferase of Helicobacter hepaticus (strain ATCC 51449 / 3B1).